The chain runs to 265 residues: Transcriptional activator TAF-1 (265 aa).

Disordered regions lie at residues 1–133 (AHGG…SEKA) and 167–218 (THLK…KQAE). Residues 35–46 (ASLSLDASAKSS) are compositionally biased toward low complexity. Composition is skewed to basic and acidic residues over residues 103–115 (RETTPDNSGDSKS) and 191–209 (NERELKREKRKQSNRESAR). Positions 194-257 (ELKREKRKQS…EKLKLENAAL (64 aa)) constitute a bZIP domain. A basic motif region spans residues 196 to 215 (KREKRKQSNRESARRSRLRK). The segment at 222-257 (LAIRVQSLTAENMTLKSEINKLMENSEKLKLENAAL) is leucine-zipper.

It belongs to the bZIP family. In terms of tissue distribution, present mainly in roots. Barely detectable in stems and leaves.

It localises to the nucleus. Functionally, trans-activator of a beta-glucuronidase (GUS) reporter gene. Binds to a G-box-related element, (5'-GCAACGTGGC-3'). Also binds to the HEX-motif of wheat histone H3 promoter. The polypeptide is Transcriptional activator TAF-1 (TAF1) (Nicotiana tabacum (Common tobacco)).